A 1631-amino-acid polypeptide reads, in one-letter code: Ras GTPase-activating-like protein IQGAP3 (1631 aa).

Residues 34-149 (LCRLEEAKRW…YCIHALSLFL (116 aa)) form the Calponin-homology (CH) domain. Tyrosine 162 is modified (phosphotyrosine). At serine 539 the chain carries Phosphoserine. IQ domains are found at residues 730-759 (NVGF…FLRT), 760-789 (WLPA…YFKA), 790-819 (NLDA…YFQK), and 820-849 (NVNS…APHP). The Ras-GAP domain maps to 1004–1253 (YLLLQLFKTA…LKFRKFIHRA (250 aa)). At serine 1424 the chain carries Phosphoserine.

In Homo sapiens (Human), this protein is Ras GTPase-activating-like protein IQGAP3 (IQGAP3).